Here is a 496-residue protein sequence, read N- to C-terminus: Fatty acyl-CoA reductase 8 (496 aa).

It belongs to the fatty acyl-CoA reductase family.

The catalysed reaction is a long-chain fatty acyl-CoA + 2 NADPH + 2 H(+) = a long-chain primary fatty alcohol + 2 NADP(+) + CoA. Functionally, catalyzes the reduction of fatty acyl-CoA to fatty alcohols. Catalyzes specifically the formation of C16:0 fatty alcohol. This Arabidopsis thaliana (Mouse-ear cress) protein is Fatty acyl-CoA reductase 8 (FAR8).